A 167-amino-acid polypeptide reads, in one-letter code: MAASCPCGSNRTYALCCKIAHKHHANVITPEQLMRSRYSAHVLGLVDYVVNTYHPSCHAEEQREGIAESIENDWCKLEVVKAEVGSNENEGFVEFNAYFDEDGKRYCMTERSRFVKEDGLWYYIDGTFPEDEPEPDPRLNQSVSSLKVGRNDPCICGSGKKFKKCCG.

It belongs to the UPF0225 family.

This Vibrio vulnificus (strain CMCP6) protein is UPF0225 protein VV1_2912.